The sequence spans 182 residues: Crossover junction endodeoxyribonuclease RuvC (182 aa).

Catalysis depends on residues D7, E69, and D141. Mg(2+)-binding residues include D7, E69, and D141.

The protein belongs to the RuvC family. As to quaternary structure, homodimer which binds Holliday junction (HJ) DNA. The HJ becomes 2-fold symmetrical on binding to RuvC with unstacked arms; it has a different conformation from HJ DNA in complex with RuvA. In the full resolvosome a probable DNA-RuvA(4)-RuvB(12)-RuvC(2) complex forms which resolves the HJ. It depends on Mg(2+) as a cofactor.

It is found in the cytoplasm. The catalysed reaction is Endonucleolytic cleavage at a junction such as a reciprocal single-stranded crossover between two homologous DNA duplexes (Holliday junction).. In terms of biological role, the RuvA-RuvB-RuvC complex processes Holliday junction (HJ) DNA during genetic recombination and DNA repair. Endonuclease that resolves HJ intermediates. Cleaves cruciform DNA by making single-stranded nicks across the HJ at symmetrical positions within the homologous arms, yielding a 5'-phosphate and a 3'-hydroxyl group; requires a central core of homology in the junction. The consensus cleavage sequence is 5'-(A/T)TT(C/G)-3'. Cleavage occurs on the 3'-side of the TT dinucleotide at the point of strand exchange. HJ branch migration catalyzed by RuvA-RuvB allows RuvC to scan DNA until it finds its consensus sequence, where it cleaves and resolves the cruciform DNA. The sequence is that of Crossover junction endodeoxyribonuclease RuvC from Variovorax paradoxus (strain S110).